Here is a 301-residue protein sequence, read N- to C-terminus: Probable alpha-L-glutamate ligase (301 aa).

The 184-residue stretch at 104–287 (LQLLSRRGIG…VAGMIIEHLE (184 aa)) folds into the ATP-grasp domain. ATP-binding positions include Lys-141, 178–179 (EY), Asp-187, and 211–213 (RSN). 3 residues coordinate Mg(2+): Asp-248, Glu-260, and Asn-262. 3 residues coordinate Mn(2+): Asp-248, Glu-260, and Asn-262.

Belongs to the RimK family. Requires Mg(2+) as cofactor. Mn(2+) is required as a cofactor.

The chain is Probable alpha-L-glutamate ligase from Pseudomonas putida (strain GB-1).